A 365-amino-acid polypeptide reads, in one-letter code: WAT1-related protein At4g01440 (365 aa).

Transmembrane regions (helical) follow at residues W8 to V28, V40 to W60, I72 to L92, T101 to F121, A132 to M152, W181 to I201, Y213 to I233, I249 to W269, I277 to I297, and I302 to L322. 2 consecutive EamA domains span residues N25–I144 and G196–L321.

Belongs to the drug/metabolite transporter (DMT) superfamily. Plant drug/metabolite exporter (P-DME) (TC 2.A.7.4) family.

The protein localises to the membrane. This is WAT1-related protein At4g01440 from Arabidopsis thaliana (Mouse-ear cress).